The chain runs to 467 residues: Protein arginine methyltransferase NDUFAF7 homolog, mitochondrial (467 aa).

It belongs to the NDUFAF7 family.

It is found in the mitochondrion. It carries out the reaction L-arginyl-[protein] + 2 S-adenosyl-L-methionine = N(omega),N(omega)'-dimethyl-L-arginyl-[protein] + 2 S-adenosyl-L-homocysteine + 2 H(+). Functionally, arginine methyltransferase involved in the assembly or stability of mitochondrial NADH:ubiquinone oxidoreductase complex (complex I). This Schizosaccharomyces pombe (strain 972 / ATCC 24843) (Fission yeast) protein is Protein arginine methyltransferase NDUFAF7 homolog, mitochondrial.